We begin with the raw amino-acid sequence, 561 residues long: Eukaryotic translation initiation factor 3 subunit D-1 (561 aa).

Residues 98-164 (VQKPPHQRGR…RGPPPKMRES (67 aa)) form a disordered region. Residues 100 to 121 (KPPHQRGRFRNMRNSRSGRGRN) show a composition bias toward basic residues. Threonine 128 is modified (phosphothreonine). Positions 289–303 (EFDLLTVNETSVEPP) are RNA gate.

It belongs to the eIF-3 subunit D family. As to quaternary structure, component of the eukaryotic translation initiation factor 3 (eIF-3) complex. The eIF-3 complex interacts with pix.

Its subcellular location is the cytoplasm. MRNA cap-binding component of the eukaryotic translation initiation factor 3 (eIF-3) complex, which is involved in protein synthesis of a specialized repertoire of mRNAs and, together with other initiation factors, stimulates binding of mRNA and methionyl-tRNAi to the 40S ribosome. The eIF-3 complex specifically targets and initiates translation of a subset of mRNAs involved in cell proliferation. In the eIF-3 complex, eif3d specifically recognizes and binds the 7-methylguanosine cap of a subset of mRNAs. The polypeptide is Eukaryotic translation initiation factor 3 subunit D-1 (Drosophila ananassae (Fruit fly)).